The primary structure comprises 141 residues: 3-hydroxyacyl-[acyl-carrier-protein] dehydratase FabZ (141 aa).

Residue histidine 49 is part of the active site.

It belongs to the thioester dehydratase family. FabZ subfamily.

It is found in the cytoplasm. The catalysed reaction is a (3R)-hydroxyacyl-[ACP] = a (2E)-enoyl-[ACP] + H2O. Its function is as follows. Involved in unsaturated fatty acids biosynthesis. Catalyzes the dehydration of short chain beta-hydroxyacyl-ACPs and long chain saturated and unsaturated beta-hydroxyacyl-ACPs. The chain is 3-hydroxyacyl-[acyl-carrier-protein] dehydratase FabZ from Fusobacterium nucleatum subsp. nucleatum (strain ATCC 25586 / DSM 15643 / BCRC 10681 / CIP 101130 / JCM 8532 / KCTC 2640 / LMG 13131 / VPI 4355).